The following is a 218-amino-acid chain: N-(5'-phosphoribosyl)anthranilate isomerase (218 aa).

Belongs to the TrpF family.

It carries out the reaction N-(5-phospho-beta-D-ribosyl)anthranilate = 1-(2-carboxyphenylamino)-1-deoxy-D-ribulose 5-phosphate. It participates in amino-acid biosynthesis; L-tryptophan biosynthesis; L-tryptophan from chorismate: step 3/5. This is N-(5'-phosphoribosyl)anthranilate isomerase from Halalkalibacterium halodurans (strain ATCC BAA-125 / DSM 18197 / FERM 7344 / JCM 9153 / C-125) (Bacillus halodurans).